Consider the following 94-residue polypeptide: CRISPR-associated endoribonuclease Cas2 1 (94 aa).

D8 is a Mg(2+) binding site.

Belongs to the CRISPR-associated endoribonuclease Cas2 protein family. In terms of assembly, homodimer, forms a heterotetramer with a Cas1 homodimer. Requires Mg(2+) as cofactor.

Functionally, CRISPR (clustered regularly interspaced short palindromic repeat), is an adaptive immune system that provides protection against mobile genetic elements (viruses, transposable elements and conjugative plasmids). CRISPR clusters contain sequences complementary to antecedent mobile elements and target invading nucleic acids. CRISPR clusters are transcribed and processed into CRISPR RNA (crRNA). Functions as a ssRNA-specific endoribonuclease. Involved in the integration of spacer DNA into the CRISPR cassette. This is CRISPR-associated endoribonuclease Cas2 1 from Synechocystis sp. (strain ATCC 27184 / PCC 6803 / Kazusa).